We begin with the raw amino-acid sequence, 712 residues long: Ribosomal RNA large subunit methyltransferase K/L (712 aa).

In terms of domain architecture, THUMP spans 46–157; sequence GAYQALLHSR…REKLIVSLDL (112 aa).

Belongs to the methyltransferase superfamily. RlmKL family.

The protein localises to the cytoplasm. It catalyses the reaction guanosine(2445) in 23S rRNA + S-adenosyl-L-methionine = N(2)-methylguanosine(2445) in 23S rRNA + S-adenosyl-L-homocysteine + H(+). The catalysed reaction is guanosine(2069) in 23S rRNA + S-adenosyl-L-methionine = N(2)-methylguanosine(2069) in 23S rRNA + S-adenosyl-L-homocysteine + H(+). In terms of biological role, specifically methylates the guanine in position 2445 (m2G2445) and the guanine in position 2069 (m7G2069) of 23S rRNA. This Haemophilus ducreyi (strain 35000HP / ATCC 700724) protein is Ribosomal RNA large subunit methyltransferase K/L.